Consider the following 405-residue polypeptide: Diaminopimelate decarboxylase (405 aa).

An N6-(pyridoxal phosphate)lysine modification is found at Lys-46. Pyridoxal 5'-phosphate is bound by residues Gly-225 and 259 to 262 (EPGR). Residues Arg-262, Arg-298, and Tyr-302 each contribute to the substrate site. Cys-329 acts as the Proton donor in catalysis. Glu-330 and Tyr-358 together coordinate substrate. Tyr-358 provides a ligand contact to pyridoxal 5'-phosphate.

This sequence belongs to the Orn/Lys/Arg decarboxylase class-II family. LysA subfamily. As to quaternary structure, homodimer. Requires pyridoxal 5'-phosphate as cofactor.

The catalysed reaction is meso-2,6-diaminopimelate + H(+) = L-lysine + CO2. The protein operates within amino-acid biosynthesis; L-lysine biosynthesis via DAP pathway; L-lysine from DL-2,6-diaminopimelate: step 1/1. Its function is as follows. Specifically catalyzes the decarboxylation of meso-diaminopimelate (meso-DAP) to L-lysine. The chain is Diaminopimelate decarboxylase from Helicobacter pylori (Campylobacter pylori).